The following is a 275-amino-acid chain: 2-dehydro-3-deoxyphosphooctonate aldolase (275 aa).

It belongs to the KdsA family.

It localises to the cytoplasm. The enzyme catalyses D-arabinose 5-phosphate + phosphoenolpyruvate + H2O = 3-deoxy-alpha-D-manno-2-octulosonate-8-phosphate + phosphate. It participates in carbohydrate biosynthesis; 3-deoxy-D-manno-octulosonate biosynthesis; 3-deoxy-D-manno-octulosonate from D-ribulose 5-phosphate: step 2/3. It functions in the pathway bacterial outer membrane biogenesis; lipopolysaccharide biosynthesis. The protein is 2-dehydro-3-deoxyphosphooctonate aldolase of Francisella philomiragia subsp. philomiragia (strain ATCC 25017 / CCUG 19701 / FSC 153 / O#319-036).